Consider the following 126-residue polypeptide: Protein ApaG (126 aa).

Residues 2-126 (SDTQHQVNVR…FRLAVPGALH (125 aa)) form the ApaG domain.

The chain is Protein ApaG from Pseudomonas aeruginosa (strain LESB58).